Here is a 488-residue protein sequence, read N- to C-terminus: MSFNHKTIEELHDLLVAKEISATELTQKTLEDIKSREEAVGSFITVSEEAALKQAAAIDAKGIDADNLMSGIPLAVKDNISTKGILTTAASKMLHNYEPIFDATSVANAYAKDMIVIGKTNMDEFAMGGSTETSYFKKTKNAWDHTKVPGGSSGGSATAVASGQVRLSLGSDTGGSIRQPAAFNGVVGLKPTYGTVSRYGLIAFGSSLDQIGPFAPTVKENAQLLNVIASSDVKDATSAPVRIADYTSKIGRDIKGMKIALPKEYLGEGIDPEIKETVLAAAKQFEALGATVEEVSLPHSKYGVAVYYIIASSEASSNLQRFDGIRYGFRADDAKNLDEIYVNTRSQGFGDEVKRRIMLGTFSLSSGYYDAYFKKAGQVRTLIIQDFDKVFADYDLILGPTTPTVAFGLDTLNHDPVAMYLADLLTIPVNLAGLPGISIPAGFVDGLPVGLQLIGPKYAEETIYQAAAAFEAVTDYHKQQPIIFGGDK.

Catalysis depends on charge relay system residues Lys-77 and Ser-152. The active-site Acyl-ester intermediate is the Ser-176.

This sequence belongs to the amidase family. GatA subfamily. Heterotrimer of A, B and C subunits.

It carries out the reaction L-glutamyl-tRNA(Gln) + L-glutamine + ATP + H2O = L-glutaminyl-tRNA(Gln) + L-glutamate + ADP + phosphate + H(+). Functionally, allows the formation of correctly charged Gln-tRNA(Gln) through the transamidation of misacylated Glu-tRNA(Gln) in organisms which lack glutaminyl-tRNA synthetase. The reaction takes place in the presence of glutamine and ATP through an activated gamma-phospho-Glu-tRNA(Gln). The sequence is that of Glutamyl-tRNA(Gln) amidotransferase subunit A from Streptococcus pyogenes serotype M5 (strain Manfredo).